The following is a 341-amino-acid chain: 4-hydroxy-2-oxovalerate aldolase (341 aa).

The Pyruvate carboxyltransferase domain occupies 9 to 260 (VVITDSTLRD…ATGIDLYRVL (252 aa)). A substrate-binding site is contributed by 17–18 (RD). Asp18 lines the Mn(2+) pocket. His21 acts as the Proton acceptor in catalysis. Positions 172 and 199 each coordinate substrate. Positions 199 and 201 each coordinate Mn(2+).

It belongs to the 4-hydroxy-2-oxovalerate aldolase family.

The enzyme catalyses (S)-4-hydroxy-2-oxopentanoate = acetaldehyde + pyruvate. The polypeptide is 4-hydroxy-2-oxovalerate aldolase (Spirochaeta aurantia).